We begin with the raw amino-acid sequence, 158 residues long: Putative pre-16S rRNA nuclease (158 aa).

Belongs to the YqgF nuclease family.

It is found in the cytoplasm. In terms of biological role, could be a nuclease involved in processing of the 5'-end of pre-16S rRNA. The chain is Putative pre-16S rRNA nuclease from Hahella chejuensis (strain KCTC 2396).